The primary structure comprises 344 residues: Anthranilate phosphoribosyltransferase (344 aa).

5-phospho-alpha-D-ribose 1-diphosphate is bound by residues glycine 80, 83-84 (GD), threonine 88, 90-93 (NIST), 108-116 (KHGNRSVSS), and serine 120. An anthranilate-binding site is contributed by glycine 80. Serine 92 is a Mg(2+) binding site. Asparagine 111 is a binding site for anthranilate. Anthranilate is bound at residue arginine 166. Residues aspartate 225 and glutamate 226 each contribute to the Mg(2+) site.

It belongs to the anthranilate phosphoribosyltransferase family. Homodimer. It depends on Mg(2+) as a cofactor.

The catalysed reaction is N-(5-phospho-beta-D-ribosyl)anthranilate + diphosphate = 5-phospho-alpha-D-ribose 1-diphosphate + anthranilate. Its pathway is amino-acid biosynthesis; L-tryptophan biosynthesis; L-tryptophan from chorismate: step 2/5. Functionally, catalyzes the transfer of the phosphoribosyl group of 5-phosphorylribose-1-pyrophosphate (PRPP) to anthranilate to yield N-(5'-phosphoribosyl)-anthranilate (PRA). This is Anthranilate phosphoribosyltransferase from Petrotoga mobilis (strain DSM 10674 / SJ95).